Reading from the N-terminus, the 642-residue chain is Threonine--tRNA ligase (642 aa).

Positions 1–61 (MPVIRFYDGS…REDAFIEFVD (61 aa)) constitute a TGS domain. Residues 243-534 (DHRKIGKFLQ…LIEECSGNLP (292 aa)) are catalytic. Positions 334, 385, and 511 each coordinate Zn(2+).

This sequence belongs to the class-II aminoacyl-tRNA synthetase family. In terms of assembly, homodimer. Requires Zn(2+) as cofactor.

It is found in the cytoplasm. It carries out the reaction tRNA(Thr) + L-threonine + ATP = L-threonyl-tRNA(Thr) + AMP + diphosphate + H(+). Its function is as follows. Catalyzes the attachment of threonine to tRNA(Thr) in a two-step reaction: L-threonine is first activated by ATP to form Thr-AMP and then transferred to the acceptor end of tRNA(Thr). Also edits incorrectly charged L-seryl-tRNA(Thr). This is Threonine--tRNA ligase from Buchnera aphidicola subsp. Acyrthosiphon pisum (strain 5A).